Reading from the N-terminus, the 280-residue chain is S-methyl-5'-thioadenosine phosphorylase (280 aa).

Phosphate is bound by residues Ser-18, 60 to 61 (RH), and 93 to 94 (TA). A substrate-binding site is contributed by Met-196. Thr-197 contacts phosphate. Residue 220–222 (DYD) coordinates substrate.

The protein belongs to the PNP/MTAP phosphorylase family. MTAP subfamily. As to quaternary structure, homotrimer.

The protein resides in the cytoplasm. Its subcellular location is the nucleus. The enzyme catalyses S-methyl-5'-thioadenosine + phosphate = 5-(methylsulfanyl)-alpha-D-ribose 1-phosphate + adenine. It participates in amino-acid biosynthesis; L-methionine biosynthesis via salvage pathway; S-methyl-5-thio-alpha-D-ribose 1-phosphate from S-methyl-5'-thioadenosine (phosphorylase route): step 1/1. Functionally, catalyzes the reversible phosphorylation of S-methyl-5'-thioadenosine (MTA) to adenine and 5-methylthioribose-1-phosphate. Involved in the breakdown of MTA, a major by-product of polyamine biosynthesis. Responsible for the first step in the methionine salvage pathway after MTA has been generated from S-adenosylmethionine. Has broad substrate specificity with 6-aminopurine nucleosides as preferred substrates. This Ciona intestinalis (Transparent sea squirt) protein is S-methyl-5'-thioadenosine phosphorylase.